Consider the following 274-residue polypeptide: Shikimate dehydrogenase (NADP(+)) (274 aa).

Residues 14 to 16 (SKS) and Thr61 contribute to the shikimate site. The Proton acceptor role is filled by Lys65. 2 residues coordinate shikimate: Asn86 and Asp102. NADP(+) contacts are provided by residues 126–130 (GAGGA), 150–155 (NRTAEK), and Met214. Tyr216 contacts shikimate. Gly239 lines the NADP(+) pocket.

Belongs to the shikimate dehydrogenase family. As to quaternary structure, homodimer.

It catalyses the reaction shikimate + NADP(+) = 3-dehydroshikimate + NADPH + H(+). The protein operates within metabolic intermediate biosynthesis; chorismate biosynthesis; chorismate from D-erythrose 4-phosphate and phosphoenolpyruvate: step 4/7. In terms of biological role, involved in the biosynthesis of the chorismate, which leads to the biosynthesis of aromatic amino acids. Catalyzes the reversible NADPH linked reduction of 3-dehydroshikimate (DHSA) to yield shikimate (SA). This chain is Shikimate dehydrogenase (NADP(+)), found in Pseudoalteromonas translucida (strain TAC 125).